The primary structure comprises 295 residues: Phosphatidylserine decarboxylase proenzyme (295 aa).

Active-site charge relay system; for autoendoproteolytic cleavage activity residues include Asp-90 and Ser-258. Ser-258 (schiff-base intermediate with substrate; via pyruvic acid; for decarboxylase activity) is an active-site residue. Ser-258 bears the Pyruvic acid (Ser); by autocatalysis mark.

Belongs to the phosphatidylserine decarboxylase family. PSD-B subfamily. Prokaryotic type I sub-subfamily. Heterodimer of a large membrane-associated beta subunit and a small pyruvoyl-containing alpha subunit. It depends on pyruvate as a cofactor. Post-translationally, is synthesized initially as an inactive proenzyme. Formation of the active enzyme involves a self-maturation process in which the active site pyruvoyl group is generated from an internal serine residue via an autocatalytic post-translational modification. Two non-identical subunits are generated from the proenzyme in this reaction, and the pyruvate is formed at the N-terminus of the alpha chain, which is derived from the carboxyl end of the proenzyme. The autoendoproteolytic cleavage occurs by a canonical serine protease mechanism, in which the side chain hydroxyl group of the serine supplies its oxygen atom to form the C-terminus of the beta chain, while the remainder of the serine residue undergoes an oxidative deamination to produce ammonia and the pyruvoyl prosthetic group on the alpha chain. During this reaction, the Ser that is part of the protease active site of the proenzyme becomes the pyruvoyl prosthetic group, which constitutes an essential element of the active site of the mature decarboxylase.

Its subcellular location is the cell membrane. The enzyme catalyses a 1,2-diacyl-sn-glycero-3-phospho-L-serine + H(+) = a 1,2-diacyl-sn-glycero-3-phosphoethanolamine + CO2. Its pathway is phospholipid metabolism; phosphatidylethanolamine biosynthesis; phosphatidylethanolamine from CDP-diacylglycerol: step 2/2. Its function is as follows. Catalyzes the formation of phosphatidylethanolamine (PtdEtn) from phosphatidylserine (PtdSer). In Blochmanniella pennsylvanica (strain BPEN), this protein is Phosphatidylserine decarboxylase proenzyme.